The following is a 235-amino-acid chain: Large ribosomal subunit protein uL1 (235 aa).

Belongs to the universal ribosomal protein uL1 family. In terms of assembly, part of the 50S ribosomal subunit.

In terms of biological role, binds directly to 23S rRNA. The L1 stalk is quite mobile in the ribosome, and is involved in E site tRNA release. Protein L1 is also a translational repressor protein, it controls the translation of the L11 operon by binding to its mRNA. The polypeptide is Large ribosomal subunit protein uL1 (Synechococcus sp. (strain CC9902)).